The following is a 136-amino-acid chain: ATP synthase F(0) complex subunit C1, mitochondrial (136 aa).

The N-terminal 61 residues, 1 to 61 (MQTTKALLIS…REFQTSVISR (61 aa)), are a transit peptide targeting the mitochondrion. A helical transmembrane segment spans residues 77 to 97 (VGVAGSGAGIGTVFGSLIIGY). The residue at position 104 (Lys-104) is an N6,N6,N6-trimethyllysine. A helical membrane pass occupies residues 112 to 132 (ILGFALSEAMGLFCLMVAFLI).

Belongs to the ATPase C chain family. As to quaternary structure, homooctamer; the c-ring consists of eight c subunits forming a circle, and each subunit adopts a hairpin shape. Component of the ATP synthase complex composed at least of ATP5F1A/subunit alpha, ATP5F1B/subunit beta, ATP5MC1/subunit c (homooctomer), MT-ATP6/subunit a, MT-ATP8/subunit 8, ATP5ME/subunit e, ATP5MF/subunit f, ATP5MG/subunit g, ATP5MK/subunit k, ATP5MJ/subunit j, ATP5F1C/subunit gamma, ATP5F1D/subunit delta, ATP5F1E/subunit epsilon, ATP5PF/subunit F6, ATP5PB/subunit b, ATP5PD/subunit d, ATP5PO/subunit OSCP. ATP synthase complex consists of a soluble F(1) head domain (subunits alpha(3) and beta(3)) - the catalytic core - and a membrane F(0) domain - the membrane proton channel (subunits c, a, 8, e, f, g, k and j). These two domains are linked by a central stalk (subunits gamma, delta, and epsilon) rotating inside the F1 region and a stationary peripheral stalk (subunits F6, b, d, and OSCP). Interacts with TMEM70 (homooligomer form); this interaction facilitates the oligomer formation of subunit c/ATP5MC1 (c-ring) and the c-ring membrane insertion and also protects ATP5MC1 against intramitochondrial proteolysis. Post-translationally, trimethylated by ATPSCKMT at Lys-104. Methylation is required for proper incorporation of the C subunit into the ATP synthase complex and mitochondrial respiration.

Its subcellular location is the mitochondrion membrane. It catalyses the reaction H(+)(in) = H(+)(out). Subunit c, of the mitochondrial membrane ATP synthase complex (F(1)F(0) ATP synthase or Complex V) that produces ATP from ADP in the presence of a proton gradient across the membrane which is generated by electron transport complexes of the respiratory chain. ATP synthase complex consist of a soluble F(1) head domain - the catalytic core - and a membrane F(1) domain - the membrane proton channel. These two domains are linked by a central stalk rotating inside the F(1) region and a stationary peripheral stalk. During catalysis, ATP synthesis in the catalytic domain of F(1) is coupled via a rotary mechanism of the central stalk subunits to proton translocation. With the subunit a (MT-ATP6), forms the proton-conducting channel in the F(0) domain, that contains two crucial half-channels (inlet and outlet) that facilitate proton movement from the mitochondrial intermembrane space (IMS) into the matrix. Protons are taken up via the inlet half-channel and released through the outlet half-channel, following a Grotthuss mechanism. This chain is ATP synthase F(0) complex subunit C1, mitochondrial, found in Rattus norvegicus (Rat).